The primary structure comprises 249 residues: 1-(5-phosphoribosyl)-5-[(5-phosphoribosylamino)methylideneamino] imidazole-4-carboxamide isomerase (249 aa).

The active-site Proton acceptor is Asp-8. Asp-131 functions as the Proton donor in the catalytic mechanism.

This sequence belongs to the HisA/HisF family.

The protein localises to the cytoplasm. The enzyme catalyses 1-(5-phospho-beta-D-ribosyl)-5-[(5-phospho-beta-D-ribosylamino)methylideneamino]imidazole-4-carboxamide = 5-[(5-phospho-1-deoxy-D-ribulos-1-ylimino)methylamino]-1-(5-phospho-beta-D-ribosyl)imidazole-4-carboxamide. The protein operates within amino-acid biosynthesis; L-histidine biosynthesis; L-histidine from 5-phospho-alpha-D-ribose 1-diphosphate: step 4/9. The protein is 1-(5-phosphoribosyl)-5-[(5-phosphoribosylamino)methylideneamino] imidazole-4-carboxamide isomerase of Aromatoleum aromaticum (strain DSM 19018 / LMG 30748 / EbN1) (Azoarcus sp. (strain EbN1)).